The primary structure comprises 1028 residues: Unconventional myosin-Ic (1028 aa).

M1 carries the N-acetylmethionine modification. The Myosin motor domain maps to 12 to 696 (GVQDFVLLEN…TLFATEDALE (685 aa)). Residues N53, Y61, 104–113 (SGESGAGKTE), and 157–161 (NDNSS) contribute to the ATP site. K348 carries the post-translational modification N6-methyllysine. Residues 573–595 (LSKLMEILMSKQPSYVRCIKPND) are actin-binding. IQ domains follow at residues 699-728 (KHSI…SAVE) and 722-751 (MKHS…AVDV). Residues 850-1024 (KDNYPQSVPR…NGHLSVVAPR (175 aa)) form the TH1 domain.

The protein belongs to the TRAFAC class myosin-kinesin ATPase superfamily. Myosin family. As to quaternary structure, interacts (via its IQ motifs) with calmodulin. In terms of tissue distribution, expressed in brain and the sacculus of the internal ear.

The protein localises to the cytoplasm. The protein resides in the cell membrane. It is found in the cell projection. It localises to the ruffle membrane. Its subcellular location is the cytoplasmic vesicle. The protein localises to the stereocilium membrane. Its function is as follows. Myosins are actin-based motor molecules with ATPase activity. Unconventional myosins serve in intracellular movements. Their highly divergent tails are presumed to bind to membranous compartments, which would be moved relative to actin filaments. This chain is Unconventional myosin-Ic (Myo1c), found in Aquarana catesbeiana (American bullfrog).